The chain runs to 364 residues: MPHSYPALSAEQKKELSDIALRIVAPGKGILAADESVGSMAKRLSQIGVENTEENRRLYRQVLFSADDRVKKCIGGVIFFHETLYQKDDNGVPFVRTIQDKGIVVGIKVDKGVVPLAGTDGETTTQGLDGLSERCAQYKKDGADFAKWRCVLKISERTPSALAILENANVLARYASICQQNGIVPIVEPEILPDGDHDLKRCQYVTEKVLAAVYKALSDHHVYLEGTLLKPNMVTPGHACPIKYTPEEIAMATVTALRRTVPPAVPGVTFLSGGQSEEEASFNLNAINRCPLPRPWALTFSYGRALQASALNAWRGQRDNAGAATEEFIKRAEVNGLAAQGKYEGSGEDGGAAAQSLYIANHAY.

Tyr-5 bears the Phosphotyrosine mark. 3 positions are modified to phosphoserine: Ser-36, Ser-39, and Ser-45. Residue Arg-56 participates in substrate binding. An N6-acetyllysine modification is found at Lys-111. Ser-132 carries the phosphoserine modification. Lys-147 lines the substrate pocket. Residue Glu-188 is the Proton acceptor of the active site. The active-site Schiff-base intermediate with dihydroxyacetone-P is the Lys-230.

The protein belongs to the class I fructose-bisphosphate aldolase family. Homotetramer. Interacts with ATP6V1E1. May interact with PLD2.

It catalyses the reaction beta-D-fructose 1,6-bisphosphate = D-glyceraldehyde 3-phosphate + dihydroxyacetone phosphate. It functions in the pathway carbohydrate degradation; glycolysis; D-glyceraldehyde 3-phosphate and glycerone phosphate from D-glucose: step 4/4. The polypeptide is Fructose-bisphosphate aldolase C (ALDOC) (Homo sapiens (Human)).